Reading from the N-terminus, the 1140-residue chain is Envelopment polyprotein (1140 aa).

A signal peptide spans 1–17 (MVGWVCISLVVLATTTA). The Lumenal portion of the chain corresponds to 18–489 (GLTRNLYELK…VPGLHGWATT (472 aa)). 6 cysteine pairs are disulfide-bonded: C30–C155, C64–C161, C113–C132, C137–C142, C179–C189, and C214–C251. N-linked (GlcNAc...) asparagine; by host glycosylation is present at N138. N351 carries N-linked (GlcNAc...) asparagine; by host glycosylation. Disulfide bonds link C380–C439, C384–C393, C409–C428, and C456–C479. An N-linked (GlcNAc...) asparagine; by host glycan is attached at N403. Residues 490–510 (ALLITFCFGWLLIPTITMIIL) form a helical membrane-spanning segment. The Cytoplasmic portion of the chain corresponds to 511–631 (KILRLLTFSC…LGVFRYKSRC (121 aa)). The interval 520 to 537 (CSHYSTESKFKAILERVK) is binding to the ribonucleoprotein. 2 CCHC-type zinc fingers span residues 549–569 (CDVC…KKSC) and 574–595 (CPYC…FSIC). 3 binding to the ribonucleoprotein regions span residues 592–609 (FSIC…KKSL), 596–607 (KLTNRFQENLKK), and 615–629 (KQGC…RYKS). Positions 611-638 (RPEVKQGCYRTLGVFRYKSRCYVGLVWG) are interaction with host TRAF3. Positions 615–638 (KQGCYRTLGVFRYKSRCYVGLVWG) constitute an ITAM domain. 2 positions are modified to phosphotyrosine; by host: Y619 and Y632. The YxxL motif lies at 619-622 (YRTL). The chain crosses the membrane as a helical span at residues 632-652 (YVGLVWGVLLTTELIVWAASA). At 653–1108 (DTPLMESGWS…EWLLGILNGN (456 aa)) the chain is on the lumenal side. 8 cysteine pairs are disulfide-bonded: C739–C774, C743–C781, C755–C888, C769–C899, C784–C907, C810–C819, C827–C836, and C867–C871. Residues 761–781 (YQYETSWGCNPPDCPGVGTGC) are fusion loop. N-linked (GlcNAc...) asparagine; by host glycosylation occurs at N931. Disulfide bonds link C973-C1003, C996-C1048, C1013-C1018, C1049-C1054, and C1088-C1092. Residues 1109–1129 (WVVVAVLIVILILSILLFSFF) traverse the membrane as a helical segment. Residues 1125 to 1140 (LFSFFCPIRGRKNKSN) form a binding to the ribonucleoprotein region. The Cytoplasmic portion of the chain corresponds to 1130 to 1140 (CPIRGRKNKSN).

This sequence belongs to the hantavirus envelope glycoprotein family. As to quaternary structure, homodimer. Homotetramer; forms heterotetrameric Gn-Gc spikes in the pre-fusion conformation. Interacts (via C-terminus) with the nucleoprotein. Interacts with host TUFM; this interaction contributes to the virus-induced degradation of mitochondria by autophagy, which leads to degradation of host MAVS and inhibition of type I interferon (IFN) responses. Interacts with host MAP1LC3B; this interaction contributes to the virus-induced degradation of mitochondria by autophagy, which leads to degradation of host MAVS and inhibition of type I interferon (IFN) responses. Interacts (via C-terminus) with host TRAF3 (via N-terminus); this interaction inhibits the formation of TRAF3-TBK1 complexes. In terms of assembly, homodimer. Homotetramer; forms heterotetrameric Gn-Gc spikes in the pre-fusion conformation. Homotrimer; forms homotrimer in the post-fusion conformation at acidic pH. Interacts (via C-terminus) with the nucleoprotein. Envelope polyprotein precursor is quickly cleaved in vivo just after synthesis, presumably by host signal peptidase.

Its subcellular location is the virion membrane. It localises to the host cell surface. It is found in the host Golgi apparatus membrane. The protein localises to the host endoplasmic reticulum membrane. The protein resides in the host mitochondrion. Functionally, forms homotetramers with glycoprotein C at the surface of the virion. Attaches the virion to host cell receptors including integrin ITGAV/ITGB3. This attachment induces virion internalization predominantly through clathrin-dependent endocytosis. Mediates the assembly and budding of infectious virus particles through its interaction with the nucleocapsid protein and the viral genome. May dysregulate normal immune and endothelial cell responses through an ITAM motif. Translocates to mitochondria, binds to host TUFM and recruits MAP1LC3B. These interactions induce mitochondrial autophagy and therefore destruction of host MAVS leading to inhibition of type I interferon (IFN) responses. Concomitant breakdown of glycoprotein N is apparently prevented by the nucleoprotein that may inhibit Gn-stimulated autophagosome-lysosome fusion. Interacts with the viral genomic RNA. Inhibits the host RIG-I/TBK1 pathway by disrupting the formation of TBK1-TRAF3 complexes and downstream signaling responses required for IFN-beta transcription. Its function is as follows. Forms homotetramers with glycoprotein N at the surface of the virion. Attaches the virion to host cell receptors including integrin ITGAV/ITGB3. This attachment induces virion internalization predominantly through clathrin-dependent endocytosis. Class II fusion protein that promotes fusion of viral membrane with host endosomal membrane after endocytosis of the virion. The sequence is that of Envelopment polyprotein (GP) from Homo sapiens (Human).